The following is a 159-amino-acid chain: NADH-quinone oxidoreductase subunit I (159 aa).

2 consecutive 4Fe-4S ferredoxin-type domains span residues 51–80 (RRYE…IEAD) and 90–119 (TRYD…EGPN). [4Fe-4S] cluster is bound by residues cysteine 60, cysteine 63, cysteine 66, cysteine 70, cysteine 99, cysteine 102, cysteine 105, and cysteine 109.

Belongs to the complex I 23 kDa subunit family. In terms of assembly, NDH-1 is composed of 14 different subunits. Subunits NuoA, H, J, K, L, M, N constitute the membrane sector of the complex. [4Fe-4S] cluster serves as cofactor.

It is found in the cell inner membrane. The catalysed reaction is a quinone + NADH + 5 H(+)(in) = a quinol + NAD(+) + 4 H(+)(out). Its function is as follows. NDH-1 shuttles electrons from NADH, via FMN and iron-sulfur (Fe-S) centers, to quinones in the respiratory chain. The immediate electron acceptor for the enzyme in this species is believed to be ubiquinone. Couples the redox reaction to proton translocation (for every two electrons transferred, four hydrogen ions are translocated across the cytoplasmic membrane), and thus conserves the redox energy in a proton gradient. This Rickettsia rickettsii (strain Sheila Smith) protein is NADH-quinone oxidoreductase subunit I.